A 230-amino-acid polypeptide reads, in one-letter code: Ion-translocating oxidoreductase complex subunit E (230 aa).

Helical transmembrane passes span 18–38, 39–59, 69–89, 93–113, 124–144, and 182–202; these read ALVQLLGLCPLLAVSSTITNA, LGLGIATLLVLVGSNVTVSLI, IPVFVMIIASLVTCVQLLMNA, GLYLSLGIFIPLIVTNCIIIG, VLPAALDGLWMGLGMTSVLVV, and SFLLALLPPGAFIGVGLLIAL.

This sequence belongs to the NqrDE/RnfAE family. As to quaternary structure, the complex is composed of six subunits: RnfA, RnfB, RnfC, RnfD, RnfE and RnfG.

It localises to the cell inner membrane. Part of a membrane-bound complex that couples electron transfer with translocation of ions across the membrane. In Vibrio parahaemolyticus serotype O3:K6 (strain RIMD 2210633), this protein is Ion-translocating oxidoreductase complex subunit E.